A 446-amino-acid chain; its full sequence is O-antigen polymerase (446 aa).

11 helical membrane passes run 11-31, 33-53, 58-78, 104-124, 147-167, 186-206, 211-231, 252-272, 355-375, 391-411, and 415-435; these read ICSY…VINE, FCEI…VIII, QGGF…FILI, IYVF…VLLY, QLSM…IKSY, LYDE…SLLF, NFIL…LVGL, LKIK…SLFL, IYLG…SLAF, KLAY…IYFA, and LFDF…LSIV.

The protein localises to the cell inner membrane. The catalysed reaction is n lipid-linked O-antigen repeat units = a lipid-linked O antigen + (n-1) polyisoprenyl diphosphate.. It participates in bacterial outer membrane biogenesis; LPS O-antigen biosynthesis. In terms of biological role, polymerase involved in the biosynthesis of the lipopolysaccharide (LPS). Catalyzes the polymerization of the O-antigen repeat units on the periplasmic face of the inner membrane, leading to the formation of the lipid-linked O-antigen molecule. In vitro, shows a preference for bacteria-based, undecaprenyl-containing substrates rather than eukaryote-based, dolichol-containing substrates. The protein is O-antigen polymerase of Escherichia coli.